A 444-amino-acid chain; its full sequence is Type VII secretion system protein EssB (444 aa).

Topologically, residues 1–229 (MVKNHNPKNE…RKVGHTVFKW (229 aa)) are cytoplasmic. Residues 230–250 (VAIGMTTLSVLLIAFLAFLYF) traverse the membrane as a helical segment. The Extracellular segment spans residues 251–444 (SVMKHNERIE…EKRQEAERKK (194 aa)). Residues 366–444 (KNNGDLSNDK…EKRQEAERKK (79 aa)) are disordered. The segment covering 372-444 (SNDKRSEETK…EKRQEAERKK (73 aa)) has biased composition (basic and acidic residues). Residues 387–443 (LQDILDKEKQVKDEKAKSEEEKAKAKDEKLKQQEENEKKQKEQAQKDKEKRQEAERK) are a coiled coil.

The protein belongs to the EssB family. As to quaternary structure, may oligomerize and interact with other membrane components to form the Ess system. Interacts with EsaA.

The protein localises to the cell membrane. Its function is as follows. Component of the type VII secretion system (Ess). Required for the secretion of EsxA and proper accumulation of EssB and EssD. This Staphylococcus aureus (strain USA300) protein is Type VII secretion system protein EssB.